The sequence spans 342 residues: Glucan endo-1,3-beta-glucosidase (342 aa).

A signal peptide spans 1 to 26 (MLASSPMLLFLLSLLMAYNFDTTAGQ). Glutamate 119 (proton donor) is an active-site residue. Glutamate 261 (nucleophile) is an active-site residue.

It belongs to the glycosyl hydrolase 17 family. In terms of processing, the N-terminus is blocked.

It is found in the vacuole. It catalyses the reaction Hydrolysis of (1-&gt;3)-beta-D-glucosidic linkages in (1-&gt;3)-beta-D-glucans.. Functionally, is thought to be an important plant defense-related product against fungal pathogens. Accumulation of the glucanase can be detected as early as 4 hours after inoculation. The polypeptide is Glucan endo-1,3-beta-glucosidase (BGL) (Brassica campestris (Field mustard)).